The sequence spans 226 residues: MKMVAPWTRFYSNSCCLCCHVRTGTILLGVWYLILNAVVLLILLSALADPDHYHFSSSELGGDFEFMDDANMCIAIAISVLMILICAMATYGAYKQRAAWIIPFFCYQIFDFALNTLVAVTVLVYPNSIQEYIRQLPPDFPYKDDIMSVNPTCLVLIILLFISIILAFKGYLISCVWNCYRYINGRNSSDVLVYVTSNDSTVLLPPYDDATVNSATKEPPPPYVSA.

The next 4 helical transmembrane spans lie at 26 to 46 (ILLGVWYLILNAVVLLILLSA), 72 to 92 (MCIAIAISVLMILICAMATYG), 100 to 120 (WIIPFFCYQIFDFALNTLVAV), and 153 to 173 (CLVLIILLFISIILAFKGYLI). Residues 205–221 (PPYDDATVNSATKEPPP) are required for NEDD4 interaction.

This sequence belongs to the LAPTM4/LAPTM5 transporter family. In terms of assembly, homooligomer; upon reaching the lysosomes. Interacts with MCOLN1. Interacts with NEDD4; may play a role in the lysosomal sorting of LAPTM4B; enhances HGS association with NEDD4; mediates inhibition of EGFR degradation. Interacts with PIP5K1C; promotes SNX5 association with LAPTM4B; kinase activity of PIP5K1C is required; interaction is regulated by phosphatidylinositol 4,5-bisphosphate generated by PIP5K1C. Interacts with HGS; promotes HGS ubiquitination. Interacts with SNX5. Interacts with SLC3A2 and SLC7A5; recruits SLC3A2 and SLC7A5 to lysosomes to promote leucine uptake into these organelles and is required for mTORC1 activation. Interacts with LRRC32; decreases TGFB1 production in regulatory T cells. Interacts with BECN1; competes with EGFR for LAPTM4B binding; regulates EGFR activity. Interacts with EGFR; positively correlates with EGFR activation. Undergoes proteolytic cleavage following delivery to the lysosomes. Post-translationally, ubiquitinated by NEDD4. Strongly expressed in fetal ovary, testis, adrenal gland, liver and uterus, and weakly expressed in the spleen.

The protein resides in the endomembrane system. The protein localises to the late endosome membrane. Its subcellular location is the cell membrane. It is found in the cell projection. It localises to the lysosome membrane. The protein resides in the endosome membrane. The protein localises to the endosome. Its subcellular location is the multivesicular body membrane. It is found in the multivesicular body lumen. Its function is as follows. Required for optimal lysosomal function. Blocks EGF-stimulated EGFR intraluminal sorting and degradation. Conversely by binding with the phosphatidylinositol 4,5-bisphosphate, regulates its PIP5K1C interaction, inhibits HGS ubiquitination and relieves LAPTM4B inhibition of EGFR degradation. Recruits SLC3A2 and SLC7A5 (the Leu transporter) to the lysosome, promoting entry of leucine and other essential amino acid (EAA) into the lysosome, stimulating activation of proton-transporting vacuolar (V)-ATPase protein pump (V-ATPase) and hence mTORC1 activation. Plays a role as negative regulator of TGFB1 production in regulatory T cells. Binds ceramide and facilitates its exit from late endosome in order to control cell death pathways. The chain is Lysosomal-associated transmembrane protein 4B from Bos taurus (Bovine).